The chain runs to 83 residues: Cytochrome b559 subunit alpha (83 aa).

The chain crosses the membrane as a helical span at residues 21-35 (VIHSITIPSLFIAGW). Histidine 23 serves as a coordination point for heme.

The protein belongs to the PsbE/PsbF family. Heterodimer of an alpha subunit and a beta subunit. PSII is composed of 1 copy each of membrane proteins PsbA, PsbB, PsbC, PsbD, PsbE, PsbF, PsbH, PsbI, PsbJ, PsbK, PsbL, PsbM, PsbT, PsbX, PsbY, PsbZ, Psb30/Ycf12, at least 3 peripheral proteins of the oxygen-evolving complex and a large number of cofactors. It forms dimeric complexes. The cofactor is heme b.

The protein resides in the plastid. It is found in the chloroplast thylakoid membrane. This b-type cytochrome is tightly associated with the reaction center of photosystem II (PSII). PSII is a light-driven water:plastoquinone oxidoreductase that uses light energy to abstract electrons from H(2)O, generating O(2) and a proton gradient subsequently used for ATP formation. It consists of a core antenna complex that captures photons, and an electron transfer chain that converts photonic excitation into a charge separation. The polypeptide is Cytochrome b559 subunit alpha (Ginkgo biloba (Ginkgo)).